A 329-amino-acid polypeptide reads, in one-letter code: GDP-mannose transporter (329 aa).

The Cytoplasmic portion of the chain corresponds to 1 to 11 (MADKGSVAAKS). A helical transmembrane segment spans residues 12 to 32 (LTNSAPLSIFSYCAASILMTV). At 33 to 40 (TNKYAVSG) the chain is on the lumenal side. Residues 41 to 61 (VDFNFNFFLLAVQGIVCITLI) traverse the membrane as a helical segment. Residues 62-83 (SSLKQLNVITFREFNKVEAKKW) are Cytoplasmic-facing. Residues 84 to 104 (FPIAVLLVVMIYTSSKALQYL) form a helical membrane-spanning segment. Topologically, residues 105–107 (SIP) are lumenal. The helical transmembrane segment at 108–128 (IYTIFKNLTIILIAYGEVIWF) threads the bilayer. Topologically, residues 129–131 (GGR) are cytoplasmic. A helical transmembrane segment spans residues 132-152 (VTNLALGSFVLMVLSSAVASY). Residues 153–163 (GDSNVDTGKLN) are Lumenal-facing. A helical transmembrane segment spans residues 164 to 184 (FNIGYFWMFTNCFSSAAFVLF). The Cytoplasmic portion of the chain corresponds to 185–196 (MRKRIKLTNFKD). The chain crosses the membrane as a helical span at residues 197-217 (FDTMYYNNLLSIPILLFASLT). Topologically, residues 218 to 237 (TEDWSAKNIAQNFPEDTKYA) are lumenal. The chain crosses the membrane as a helical span at residues 238–258 (VIASMIISGMSAVGISYTSAW). Residues 259-266 (CVRVTSST) lie on the Cytoplasmic side of the membrane. The chain crosses the membrane as a helical span at residues 267–287 (TYSMVGALNKLPIALSGLLFF). Over 288-290 (KAP) the chain is Lumenal. The helical transmembrane segment at 291–311 (INFYSISSIFIGFAAGLVYAI) threads the bilayer. Over 312–329 (AKQKQKKEDELQLPTDKS) the chain is Cytoplasmic.

It belongs to the TPT transporter family. SLC35D subfamily. Homooligomer.

It is found in the golgi apparatus membrane. The protein localises to the cytoplasmic vesicle membrane. The protein resides in the endoplasmic reticulum membrane. Its function is as follows. Involved in the import of GDP-mannose from the cytoplasm into the Golgi lumen. This is GDP-mannose transporter (VIG4) from Komagataella pastoris (Yeast).